Reading from the N-terminus, the 494-residue chain is UDP-N-acetylmuramoyl-L-alanyl-D-glutamate--2,6-diaminopimelate ligase (494 aa).

Ser32 serves as a coordination point for UDP-N-acetyl-alpha-D-muramoyl-L-alanyl-D-glutamate. 112–118 (GTNGKTT) lines the ATP pocket. UDP-N-acetyl-alpha-D-muramoyl-L-alanyl-D-glutamate contacts are provided by residues Asn153, 154–155 (TT), Ser181, and Arg189. Position 221 is an N6-carboxylysine (Lys221). Residues Arg383, 407 to 410 (DNPR), Gly459, and Glu463 each bind meso-2,6-diaminopimelate. A Meso-diaminopimelate recognition motif motif is present at residues 407 to 410 (DNPR).

It belongs to the MurCDEF family. MurE subfamily. The cofactor is Mg(2+). Carboxylation is probably crucial for Mg(2+) binding and, consequently, for the gamma-phosphate positioning of ATP.

The protein resides in the cytoplasm. The catalysed reaction is UDP-N-acetyl-alpha-D-muramoyl-L-alanyl-D-glutamate + meso-2,6-diaminopimelate + ATP = UDP-N-acetyl-alpha-D-muramoyl-L-alanyl-gamma-D-glutamyl-meso-2,6-diaminopimelate + ADP + phosphate + H(+). It functions in the pathway cell wall biogenesis; peptidoglycan biosynthesis. Functionally, catalyzes the addition of meso-diaminopimelic acid to the nucleotide precursor UDP-N-acetylmuramoyl-L-alanyl-D-glutamate (UMAG) in the biosynthesis of bacterial cell-wall peptidoglycan. The sequence is that of UDP-N-acetylmuramoyl-L-alanyl-D-glutamate--2,6-diaminopimelate ligase from Solibacter usitatus (strain Ellin6076).